The sequence spans 270 residues: PspA protein (270 aa).

The segment at 238–270 (MRGEALPAGGTTATPRPATETSGGAIAEQPYGQ) is disordered. Residues 240-258 (GEALPAGGTTATPRPATET) show a composition bias toward low complexity.

The protein belongs to the PspA/Vipp/IM30 family.

The protein localises to the cytoplasm. In terms of biological role, involved in resistance to stress. Associates with and regulates lipid droplets (LDs) homeostasis under conditions of stress and may regulate non-replicating persistence (NRP). Could be involved in preservation of envelope integrity and tolerance to surface stress. The polypeptide is PspA protein (Mycobacterium tuberculosis (strain ATCC 25177 / H37Ra)).